Consider the following 423-residue polypeptide: Serine--tRNA ligase (423 aa).

231 to 233 (TAE) is an L-serine binding site. 262–264 (RSE) contributes to the ATP binding site. E285 is a binding site for L-serine. 349–352 (EIGS) serves as a coordination point for ATP. Residue S385 participates in L-serine binding.

Belongs to the class-II aminoacyl-tRNA synthetase family. Type-1 seryl-tRNA synthetase subfamily. As to quaternary structure, homodimer. The tRNA molecule binds across the dimer.

It localises to the cytoplasm. It catalyses the reaction tRNA(Ser) + L-serine + ATP = L-seryl-tRNA(Ser) + AMP + diphosphate + H(+). The catalysed reaction is tRNA(Sec) + L-serine + ATP = L-seryl-tRNA(Sec) + AMP + diphosphate + H(+). The protein operates within aminoacyl-tRNA biosynthesis; selenocysteinyl-tRNA(Sec) biosynthesis; L-seryl-tRNA(Sec) from L-serine and tRNA(Sec): step 1/1. Its function is as follows. Catalyzes the attachment of serine to tRNA(Ser). Is also able to aminoacylate tRNA(Sec) with serine, to form the misacylated tRNA L-seryl-tRNA(Sec), which will be further converted into selenocysteinyl-tRNA(Sec). The chain is Serine--tRNA ligase from Acholeplasma laidlawii (strain PG-8A).